A 208-amino-acid polypeptide reads, in one-letter code: Rac-like GTP-binding protein ARAC8 (208 aa).

Position 15–22 (15–22 (GDGAVGKT)) interacts with GTP. The short motif at 37-45 (YIPTVFDNF) is the Effector region element. GTP contacts are provided by residues 62-66 (DTAGQ) and 120-123 (TKMD). S-palmitoyl cysteine attachment occurs at residues cysteine 199 and cysteine 205.

This sequence belongs to the small GTPase superfamily. Rho family. As to quaternary structure, interacts with ICR1. Binds to SPK1. Although this sequence has a C-terminal -CXXX, it is palmitoylated at Cys-205, rather than prenylated.

The protein localises to the membrane. In terms of biological role, acts as a negative regulator of abscisic acid (ABA) responses. The chain is Rac-like GTP-binding protein ARAC8 (ARAC8) from Arabidopsis thaliana (Mouse-ear cress).